We begin with the raw amino-acid sequence, 82 residues long: Small ribosomal subunit protein bS16 (82 aa).

It belongs to the bacterial ribosomal protein bS16 family.

The chain is Small ribosomal subunit protein bS16 from Psychromonas ingrahamii (strain DSM 17664 / CCUG 51855 / 37).